The following is a 367-amino-acid chain: DNA replication and repair protein RecF (367 aa).

30–37 (GANGSGKT) contacts ATP.

Belongs to the RecF family.

It is found in the cytoplasm. In terms of biological role, the RecF protein is involved in DNA metabolism; it is required for DNA replication and normal SOS inducibility. RecF binds preferentially to single-stranded, linear DNA. It also seems to bind ATP. This is DNA replication and repair protein RecF from Pseudomonas putida (strain ATCC 47054 / DSM 6125 / CFBP 8728 / NCIMB 11950 / KT2440).